The chain runs to 308 residues: Hydroxyacylglutathione hydrolase, mitochondrial (308 aa).

The N-terminal 13 residues, 1 to 13 (MVLGRGLLGRRSL), are a transit peptide targeting the mitochondrion. Zn(2+) contacts are provided by His-102, His-104, Asp-106, and His-107. Position 116 is an N6-acetyllysine (Lys-116). Zn(2+) contacts are provided by His-158 and Asp-182. Substrate is bound by residues 191–193 (KFY) and 221–223 (HEY). His-221 is a Zn(2+) binding site. Lys-229 is subject to N6-acetyllysine; alternate. N6-succinyllysine; alternate is present on Lys-229. 297–300 (RKEK) is a binding site for substrate.

This sequence belongs to the metallo-beta-lactamase superfamily. Glyoxalase II family. In terms of assembly, monomer. Zn(2+) serves as cofactor. Testis.

It localises to the mitochondrion matrix. It is found in the cytoplasm. It catalyses the reaction an S-(2-hydroxyacyl)glutathione + H2O = a 2-hydroxy carboxylate + glutathione + H(+). It carries out the reaction (R)-S-lactoylglutathione + H2O = (R)-lactate + glutathione + H(+). It functions in the pathway secondary metabolite metabolism; methylglyoxal degradation; (R)-lactate from methylglyoxal: step 2/2. In terms of biological role, thiolesterase that catalyzes the hydrolysis of S-D-lactoyl-glutathione to form glutathione and D-lactic acid. In Macaca fascicularis (Crab-eating macaque), this protein is Hydroxyacylglutathione hydrolase, mitochondrial (HAGH).